We begin with the raw amino-acid sequence, 476 residues long: Argininosuccinate lyase (476 aa).

It belongs to the lyase 1 family. Argininosuccinate lyase subfamily.

Its subcellular location is the cytoplasm. It carries out the reaction 2-(N(omega)-L-arginino)succinate = fumarate + L-arginine. It functions in the pathway amino-acid biosynthesis; L-arginine biosynthesis; L-arginine from L-ornithine and carbamoyl phosphate: step 3/3. The polypeptide is Argininosuccinate lyase (Acaryochloris marina (strain MBIC 11017)).